Consider the following 132-residue polypeptide: ATP synthase epsilon chain (132 aa).

This sequence belongs to the ATPase epsilon chain family. F-type ATPases have 2 components, CF(1) - the catalytic core - and CF(0) - the membrane proton channel. CF(1) has five subunits: alpha(3), beta(3), gamma(1), delta(1), epsilon(1). CF(0) has three main subunits: a, b and c.

The protein localises to the cell inner membrane. Functionally, produces ATP from ADP in the presence of a proton gradient across the membrane. The protein is ATP synthase epsilon chain of Cereibacter sphaeroides (strain ATCC 17025 / ATH 2.4.3) (Rhodobacter sphaeroides).